The sequence spans 388 residues: Na(+)/H(+) antiporter NhaA (388 aa).

A run of 12 helical transmembrane segments spans residues 13–33 (AAGGIILIVAAIIALIMANTP), 36–56 (GIYHAFLNLPVMVKVSSLEIA), 59–79 (LLLWINDGLMAIFFLVVGLEV), 95–115 (VFPAIAALGGMLAPALIYLMF), 125–145 (GWAIPAATDIAFALGVMALLG), 154–174 (VFLLALAIIDDLGVIVIIALF), 179–199 (VSMAALGVAAASIAVLAFMNW), 213–233 (LVLWVAILKSGVHATLAGVII), 259–279 (VAFLILPLFAFANAGVSLQGV), 287–307 (LLPVGIAAGLFIGKPLGIFTF), 328–348 (VFAVSVLCGIGFTMSIFIASL), and 363–383 (LGILIGSTTAAVVGYGLLRMS).

The protein belongs to the NhaA Na(+)/H(+) (TC 2.A.33) antiporter family.

It localises to the cell inner membrane. The catalysed reaction is Na(+)(in) + 2 H(+)(out) = Na(+)(out) + 2 H(+)(in). Functionally, na(+)/H(+) antiporter that extrudes sodium in exchange for external protons. This Serratia proteamaculans (strain 568) protein is Na(+)/H(+) antiporter NhaA.